The sequence spans 98 residues: DNA-binding protein Fis (98 aa).

Residues 74-93 (QTRAALMMGINRGTLRKKLK) constitute a DNA-binding region (H-T-H motif).

This sequence belongs to the transcriptional regulatory Fis family. Homodimer.

Functionally, activates ribosomal RNA transcription. Plays a direct role in upstream activation of rRNA promoters. The chain is DNA-binding protein Fis from Citrobacter koseri (strain ATCC BAA-895 / CDC 4225-83 / SGSC4696).